The following is a 119-amino-acid chain: Large ribosomal subunit protein uL18 (119 aa).

Residues 1 to 10 (MKKIKEAEQR) show a composition bias toward basic and acidic residues. Residues 1–20 (MKKIKEAEQRKLRRKKRIKD) are disordered.

The protein belongs to the universal ribosomal protein uL18 family. In terms of assembly, part of the 50S ribosomal subunit; part of the 5S rRNA/L5/L18/L25 subcomplex. Contacts the 5S and 23S rRNAs.

In terms of biological role, this is one of the proteins that bind and probably mediate the attachment of the 5S RNA into the large ribosomal subunit, where it forms part of the central protuberance. The polypeptide is Large ribosomal subunit protein uL18 (Borreliella burgdorferi (strain ATCC 35210 / DSM 4680 / CIP 102532 / B31) (Borrelia burgdorferi)).